A 366-amino-acid polypeptide reads, in one-letter code: Peroxisomal (S)-2-hydroxy-acid oxidase GLO4 (366 aa).

The FMN hydroxy acid dehydrogenase domain occupies 1–360; that stretch reads MEDNLPVNVR…TRSHVMTEGD (360 aa). Residue Tyr27 coordinates a 2-oxocarboxylate. Residues 80–82, Ser109, 130–132, and Thr158 each bind FMN; these read PTG and QLY. A 2-oxocarboxylate is bound at residue Tyr132. Arg167 provides a ligand contact to a 2-oxocarboxylate. Residues Lys231 and Ser253 each coordinate FMN. Residue His255 is the Proton acceptor of the active site. An a 2-oxocarboxylate-binding site is contributed by Arg258. FMN contacts are provided by residues 286 to 290 and 309 to 310; these read DGGIR and XX. A Microbody targeting signal motif is present at residues 364 to 366; that stretch reads SLL.

Belongs to the FMN-dependent alpha-hydroxy acid dehydrogenase family. Homotetramer. The cofactor is FMN.

It localises to the peroxisome. The catalysed reaction is a (2S)-2-hydroxycarboxylate + O2 = a 2-oxocarboxylate + H2O2. It participates in lipid metabolism; fatty acid metabolism. Oxidase that catalyzes the oxidation of a broad range of 2-hydroxyacids to the corresponding 2-oxoacids, with a reduction of O2 to H2O2. May be involved in a general medium- and long-chain fatty acid catabolic pathway such as alpha-oxidation. This chain is Peroxisomal (S)-2-hydroxy-acid oxidase GLO4 (GLO4), found in Oryza sativa subsp. indica (Rice).